Here is a 213-residue protein sequence, read N- to C-terminus: Superoxide dismutase [Mn] (213 aa).

4 residues coordinate Mn(2+): His-27, His-82, Asp-168, and His-172.

The protein belongs to the iron/manganese superoxide dismutase family. As to quaternary structure, homodimer. Mn(2+) is required as a cofactor.

It carries out the reaction 2 superoxide + 2 H(+) = H2O2 + O2. Destroys superoxide anion radicals which are normally produced within the cells and which are toxic to biological systems. This is Superoxide dismutase [Mn] (sodA) from Mannheimia haemolytica (Pasteurella haemolytica).